Consider the following 631-residue polypeptide: 1-deoxy-D-xylulose-5-phosphate synthase (631 aa).

Thiamine diphosphate-binding positions include His-76 and 117 to 119; that span reads AHS. Asp-148 lines the Mg(2+) pocket. Residues 149–150, Asn-177, Tyr-284, and Glu-365 contribute to the thiamine diphosphate site; that span reads GA. Asn-177 contacts Mg(2+).

Belongs to the transketolase family. DXPS subfamily. Homodimer. Mg(2+) is required as a cofactor. Requires thiamine diphosphate as cofactor.

The enzyme catalyses D-glyceraldehyde 3-phosphate + pyruvate + H(+) = 1-deoxy-D-xylulose 5-phosphate + CO2. It functions in the pathway metabolic intermediate biosynthesis; 1-deoxy-D-xylulose 5-phosphate biosynthesis; 1-deoxy-D-xylulose 5-phosphate from D-glyceraldehyde 3-phosphate and pyruvate: step 1/1. Catalyzes the acyloin condensation reaction between C atoms 2 and 3 of pyruvate and glyceraldehyde 3-phosphate to yield 1-deoxy-D-xylulose-5-phosphate (DXP). In Methylibium petroleiphilum (strain ATCC BAA-1232 / LMG 22953 / PM1), this protein is 1-deoxy-D-xylulose-5-phosphate synthase.